The chain runs to 285 residues: Acetylglutamate kinase (285 aa).

Residues 55–56 (GG), Arg77, and Asn171 each bind substrate.

The protein belongs to the acetylglutamate kinase family. ArgB subfamily.

Its subcellular location is the cytoplasm. It catalyses the reaction N-acetyl-L-glutamate + ATP = N-acetyl-L-glutamyl 5-phosphate + ADP. It participates in amino-acid biosynthesis; L-arginine biosynthesis; N(2)-acetyl-L-ornithine from L-glutamate: step 2/4. Functionally, catalyzes the ATP-dependent phosphorylation of N-acetyl-L-glutamate. This Chlorobaculum tepidum (strain ATCC 49652 / DSM 12025 / NBRC 103806 / TLS) (Chlorobium tepidum) protein is Acetylglutamate kinase.